A 191-amino-acid polypeptide reads, in one-letter code: Holliday junction branch migration complex subunit RuvA (191 aa).

Positions 1–63 (MIRYLRGLVL…EEGLSLYGFP (63 aa)) are domain I. Residues 64–136 (DEENLALFEL…LKGKVPPHLL (73 aa)) are domain II. A flexible linker region spans residues 136–140 (LAGEK). Residues 141-191 (VESEAAEEAVMALAALGFKEAQARAVVLDLLAQNPKARAQDLIKEALKRLR) are domain III.

This sequence belongs to the RuvA family. In terms of assembly, homotetramer. Forms an RuvA(8)-RuvB(12)-Holliday junction (HJ) complex. HJ DNA is sandwiched between 2 RuvA tetramers; dsDNA enters through RuvA and exits via RuvB. An RuvB hexamer assembles on each DNA strand where it exits the tetramer. Each RuvB hexamer is contacted by two RuvA subunits (via domain III) on 2 adjacent RuvB subunits; this complex drives branch migration. In the full resolvosome a probable DNA-RuvA(4)-RuvB(12)-RuvC(2) complex forms which resolves the HJ.

The protein localises to the cytoplasm. The RuvA-RuvB-RuvC complex processes Holliday junction (HJ) DNA during genetic recombination and DNA repair, while the RuvA-RuvB complex plays an important role in the rescue of blocked DNA replication forks via replication fork reversal (RFR). RuvA specifically binds to HJ cruciform DNA, conferring on it an open structure. The RuvB hexamer acts as an ATP-dependent pump, pulling dsDNA into and through the RuvAB complex. HJ branch migration allows RuvC to scan DNA until it finds its consensus sequence, where it cleaves and resolves the cruciform DNA. The polypeptide is Holliday junction branch migration complex subunit RuvA (Thermus thermophilus (strain ATCC BAA-163 / DSM 7039 / HB27)).